Reading from the N-terminus, the 102-residue chain is NADH-quinone oxidoreductase subunit K 1 (102 aa).

3 helical membrane passes run leucine 6–valine 26, leucine 31–phenylalanine 51, and phenylalanine 65–leucine 85.

The protein belongs to the complex I subunit 4L family. In terms of assembly, NDH-1 is composed of 14 different subunits. Subunits NuoA, H, J, K, L, M, N constitute the membrane sector of the complex.

The protein localises to the cell membrane. The enzyme catalyses a quinone + NADH + 5 H(+)(in) = a quinol + NAD(+) + 4 H(+)(out). NDH-1 shuttles electrons from NADH, via FMN and iron-sulfur (Fe-S) centers, to quinones in the respiratory chain. The immediate electron acceptor for the enzyme in this species is believed to be a menaquinone. Couples the redox reaction to proton translocation (for every two electrons transferred, four hydrogen ions are translocated across the cytoplasmic membrane), and thus conserves the redox energy in a proton gradient. In Symbiobacterium thermophilum (strain DSM 24528 / JCM 14929 / IAM 14863 / T), this protein is NADH-quinone oxidoreductase subunit K 1.